A 306-amino-acid chain; its full sequence is Ornithine carbamoyltransferase (306 aa).

Carbamoyl phosphate contacts are provided by residues 53-56 (STRT), Q80, R104, and 131-134 (HPCQ). L-ornithine-binding positions include N162, D219, and 223–224 (SM). Residues 259 to 260 (CL) and R287 contribute to the carbamoyl phosphate site.

Belongs to the aspartate/ornithine carbamoyltransferase superfamily. OTCase family.

It is found in the cytoplasm. The catalysed reaction is carbamoyl phosphate + L-ornithine = L-citrulline + phosphate + H(+). It participates in amino-acid degradation; L-arginine degradation via ADI pathway; carbamoyl phosphate from L-arginine: step 2/2. Its function is as follows. Reversibly catalyzes the transfer of the carbamoyl group from carbamoyl phosphate (CP) to the N(epsilon) atom of ornithine (ORN) to produce L-citrulline. The protein is Ornithine carbamoyltransferase of Acinetobacter baumannii (strain AYE).